The following is a 604-amino-acid chain: Arginine--tRNA ligase (604 aa).

The 'HIGH' region motif lies at 142–152; that stretch reads PNIAKEMHVGH.

The protein belongs to the class-I aminoacyl-tRNA synthetase family. In terms of assembly, monomer.

Its subcellular location is the cytoplasm. The enzyme catalyses tRNA(Arg) + L-arginine + ATP = L-arginyl-tRNA(Arg) + AMP + diphosphate. The sequence is that of Arginine--tRNA ligase from Prochlorococcus marinus (strain MIT 9312).